The primary structure comprises 419 residues: Glucose-1-phosphate adenylyltransferase (419 aa).

Residues Tyr106, Gly171, 186 to 187 (EK), and Ser204 each bind alpha-D-glucose 1-phosphate.

This sequence belongs to the bacterial/plant glucose-1-phosphate adenylyltransferase family. In terms of assembly, homotetramer.

It carries out the reaction alpha-D-glucose 1-phosphate + ATP + H(+) = ADP-alpha-D-glucose + diphosphate. It participates in glycan biosynthesis; glycogen biosynthesis. In terms of biological role, involved in the biosynthesis of ADP-glucose, a building block required for the elongation reactions to produce glycogen. Catalyzes the reaction between ATP and alpha-D-glucose 1-phosphate (G1P) to produce pyrophosphate and ADP-Glc. The protein is Glucose-1-phosphate adenylyltransferase of Roseobacter denitrificans (strain ATCC 33942 / OCh 114) (Erythrobacter sp. (strain OCh 114)).